Consider the following 64-residue polypeptide: Large ribosomal subunit protein bL35 (64 aa).

Residues 1 to 14 are compositionally biased toward basic residues; that stretch reads MKQKTHKGTAKRVK. Residues 1-50 are disordered; the sequence is MKQKTHKGTAKRVKITGSGKLRREQANRRHLLEGKPSKRTRRLKGTEDVA. The span at 21-36 shows a compositional bias: basic and acidic residues; it reads LRREQANRRHLLEGKP.

The protein belongs to the bacterial ribosomal protein bL35 family.

In Corynebacterium diphtheriae (strain ATCC 700971 / NCTC 13129 / Biotype gravis), this protein is Large ribosomal subunit protein bL35.